A 146-amino-acid polypeptide reads, in one-letter code: Calmodulin-like protein 5 (146 aa).

Position 2 is an N-acetylalanine (A2). EF-hand domains follow at residues 8–43 (EEEAQYKKAFSAVDTDGNGTINAQELGAALKATGKN), 44–74 (LSEAQLRKLISEVDSDGDGEISFQEFLTAAK), 78–113 (AGLEDLQVAFRAFDQDGDGHITVDELRRAMAGLGQP), and 114–146 (LPQEELDAMIREADVDQDGRVNYEEFARMLAQE). The Ca(2+) site is built by D21, D23, N25, T27, E32, D57, D59, D61, E63, E68, D91, D93, D95, H97, E102, D127, D129, D131, R133, and E138.

Associates with transglutaminase 3. As to expression, particularly abundant in the epidermis where its expression is directly related to keratinocyte differentiation. Very low expression in lung.

In terms of biological role, binds calcium. May be involved in terminal differentiation of keratinocytes. This is Calmodulin-like protein 5 (CALML5) from Homo sapiens (Human).